Reading from the N-terminus, the 272-residue chain is Glutamate racemase (272 aa).

Substrate is bound by residues 16 to 17 (DS) and 48 to 49 (YG). C79 functions as the Proton donor/acceptor in the catalytic mechanism. Substrate is bound at residue 80-81 (NT). Catalysis depends on C191, which acts as the Proton donor/acceptor. 192-193 (TH) contributes to the substrate binding site.

Belongs to the aspartate/glutamate racemases family.

The catalysed reaction is L-glutamate = D-glutamate. It participates in cell wall biogenesis; peptidoglycan biosynthesis. Provides the (R)-glutamate required for cell wall biosynthesis. This chain is Glutamate racemase, found in Chlorobaculum parvum (strain DSM 263 / NCIMB 8327) (Chlorobium vibrioforme subsp. thiosulfatophilum).